A 515-amino-acid chain; its full sequence is Bifunctional purine biosynthesis protein PurH (515 aa).

In terms of domain architecture, MGS-like spans 1–145 (MTKRALISVS…KNHASVTVVV (145 aa)).

The protein belongs to the PurH family.

The enzyme catalyses (6R)-10-formyltetrahydrofolate + 5-amino-1-(5-phospho-beta-D-ribosyl)imidazole-4-carboxamide = 5-formamido-1-(5-phospho-D-ribosyl)imidazole-4-carboxamide + (6S)-5,6,7,8-tetrahydrofolate. It catalyses the reaction IMP + H2O = 5-formamido-1-(5-phospho-D-ribosyl)imidazole-4-carboxamide. The protein operates within purine metabolism; IMP biosynthesis via de novo pathway; 5-formamido-1-(5-phospho-D-ribosyl)imidazole-4-carboxamide from 5-amino-1-(5-phospho-D-ribosyl)imidazole-4-carboxamide (10-formyl THF route): step 1/1. It functions in the pathway purine metabolism; IMP biosynthesis via de novo pathway; IMP from 5-formamido-1-(5-phospho-D-ribosyl)imidazole-4-carboxamide: step 1/1. This Streptococcus suis (strain 98HAH33) protein is Bifunctional purine biosynthesis protein PurH.